A 105-amino-acid polypeptide reads, in one-letter code: MARSLCFMAFAILAMMLFVAYEVQARECKTESNTFPGICITKPPCRKACISEKFTDGHCSKLLRRCLCTKPCVFDEKMIKTGAETLVEEAKTLAAALLEEEIMDN.

Positions 1–25 (MARSLCFMAFAILAMMLFVAYEVQA) are cleaved as a signal peptide. Intrachain disulfides connect cysteine 28–cysteine 72, cysteine 39–cysteine 59, cysteine 45–cysteine 66, and cysteine 49–cysteine 68.

Belongs to the DEFL family. Flower. Found in petals, stamen and pistils, but not in sepals. In particular, accumulation in a configuration surrounding the inner reproductive whorls.

Its subcellular location is the secreted. It localises to the cell wall. It is found in the vacuole. Functionally, involved in floral organogenesis. May play a protective role in flowers by protecting the reproductive organs from potential pathogen attack. The chain is Defensin-like protein (FST) from Nicotiana tabacum (Common tobacco).